The following is a 152-amino-acid chain: Prostaglandin E synthase (152 aa).

The Lumenal segment spans residues 1-12; sequence MPAHSLAMSSPA. A helical transmembrane segment spans residues 13–41; it reads LPAFLLCSTLLVIKMYVVAIITGQVRLRK. Residue R38 coordinates glutathione. The Cytoplasmic portion of the chain corresponds to 42–60; the sequence is KAFANPEDALRHGGPQYCR. A helical transmembrane segment spans residues 61 to 90; sequence SDPDVERCLRAHRNDMETIYPFLFLGFVYS. Residue 73–77 coordinates glutathione; the sequence is RNDME. The Lumenal portion of the chain corresponds to 91–95; it reads FLGPN. Residues 96 to 119 form a helical membrane-spanning segment; sequence PFVAWMHFLVFLLGRVVHTVAYLG. H113 and Y117 together coordinate glutathione. At 120-123 the chain is on the cytoplasmic side; sequence KLRA. A helical membrane pass occupies residues 124–152; it reads PIRSVTYTLAQLPCASMALQILWEAARHL. 126-130 lines the glutathione pocket; sequence RSVTY.

It belongs to the MAPEG family. As to quaternary structure, homotrimer. Glutathione is required as a cofactor.

Its subcellular location is the membrane. It is found in the cytoplasm. The protein resides in the perinuclear region. The enzyme catalyses prostaglandin H2 = prostaglandin E2. It catalyses the reaction 2-glyceryl-prostaglandin H2 = 2-glyceryl-prostaglandin E2. It carries out the reaction prostaglandin G2 = (15S)-15-hydroperoxy-prostaglandin E2. The catalysed reaction is 1-chloro-2,4-dinitrobenzene + glutathione = 2,4-dinitrophenyl-S-glutathione + chloride + H(+). The enzyme catalyses (5S)-hydroperoxy-(6E,8Z,11Z,14Z)-eicosatetraenoate + 2 glutathione = (5S)-hydroxy-(6E,8Z,11Z,14Z)-eicosatetraenoate + glutathione disulfide + H2O. The protein operates within lipid metabolism; prostaglandin biosynthesis. In terms of biological role, terminal enzyme of the cyclooxygenase (COX)-2-mediated prostaglandin E2 (PGE2) biosynthetic pathway. Catalyzes the glutathione-dependent oxidoreduction of prostaglandin endoperoxide H2 (PGH2) to prostaglandin E2 (PGE2) in response to inflammatory stimuli. Plays a key role in inflammation response, fever and pain. Also catalyzes the oxidoreduction of endocannabinoids into prostaglandin glycerol esters and PGG2 into 15-hydroperoxy-PGE2. In addition, displays low glutathione transferase and glutathione-dependent peroxidase activities, toward 1-chloro-2,4-dinitrobenzene and 5-hydroperoxyicosatetraenoic acid (5-HPETE), respectively. This Macaca fascicularis (Crab-eating macaque) protein is Prostaglandin E synthase (PTGES).